We begin with the raw amino-acid sequence, 255 residues long: Indole-3-glycerol phosphate synthase (255 aa).

Belongs to the TrpC family.

It carries out the reaction 1-(2-carboxyphenylamino)-1-deoxy-D-ribulose 5-phosphate + H(+) = (1S,2R)-1-C-(indol-3-yl)glycerol 3-phosphate + CO2 + H2O. It functions in the pathway amino-acid biosynthesis; L-tryptophan biosynthesis; L-tryptophan from chorismate: step 4/5. This chain is Indole-3-glycerol phosphate synthase, found in Streptococcus thermophilus (strain ATCC BAA-250 / LMG 18311).